The following is a 1372-amino-acid chain: DNA-directed RNA polymerase subunit beta (1372 aa).

This sequence belongs to the RNA polymerase beta chain family. The RNAP catalytic core consists of 2 alpha, 1 beta, 1 beta' and 1 omega subunit. When a sigma factor is associated with the core the holoenzyme is formed, which can initiate transcription.

It catalyses the reaction RNA(n) + a ribonucleoside 5'-triphosphate = RNA(n+1) + diphosphate. Its function is as follows. DNA-dependent RNA polymerase catalyzes the transcription of DNA into RNA using the four ribonucleoside triphosphates as substrates. The polypeptide is DNA-directed RNA polymerase subunit beta (Bradyrhizobium sp. (strain BTAi1 / ATCC BAA-1182)).